We begin with the raw amino-acid sequence, 351 residues long: C-X-C chemokine receptor type 1 (351 aa).

Residues 1-44 are Extracellular-facing; that stretch reads MAEAEYFIWTNPEGDFEKEFGNITGMLPTGDYFIPCKRVPITNR. Asparagine 22 carries N-linked (GlcNAc...) asparagine glycosylation. A helical transmembrane segment spans residues 45-71; it reads QALVVFYALVSLLSLLGNSLVMLVILY. At 72–80 the chain is on the cytoplasmic side; that stretch reads RRRTRSVMD. A helical membrane pass occupies residues 81–101; sequence VYVLNLAIADLLFSLTLPFLA. Residues 102–116 are Extracellular-facing; the sequence is VSKLKGWIFGTPLCK. A disulfide bridge connects residues cysteine 115 and cysteine 192. Residues 117–138 traverse the membrane as a helical segment; it reads MVSLLKEFNFFSGILLLACISV. At 139 to 159 the chain is on the cytoplasmic side; sequence DRYLAIVHATRTLARKRYLVK. The chain crosses the membrane as a helical span at residues 160 to 179; it reads FVCVGIWGLSLILSLPFAIF. Residues 180–204 are Extracellular-facing; the sequence is RQAYKPFRSGTVCYEVLGEATTDFR. A helical transmembrane segment spans residues 205–225; that stretch reads MTLRGLSHIFGFLLPLLTMLV. Topologically, residues 226–247 are cytoplasmic; sequence CYGLTLRMLFKTHMRQKHRAMG. Residues 248-269 traverse the membrane as a helical segment; sequence VIFAVVLVFLLCCLPYNLVLLS. Topologically, residues 270–290 are extracellular; it reads DTLLGAHLIEDTCERRNDIDQ. The chain crosses the membrane as a helical span at residues 291-313; that stretch reads ALYITEILGFSHSCLNPIIYAFV. Residues 314 to 351 lie on the Cytoplasmic side of the membrane; that stretch reads GQNFRHEFLKILANHGLVRKEVLTHRRVAFHTSLTAIY.

The protein belongs to the G-protein coupled receptor 1 family. As to quaternary structure, interacts with IL8. Interacts with GNAI2.

It localises to the cell membrane. Functionally, receptor to interleukin-8, which is a powerful neutrophils chemotactic factor. Binding of IL-8 to the receptor causes activation of neutrophils. This response is mediated via a G-protein that activates a phosphatidylinositol-calcium second messenger system. The polypeptide is C-X-C chemokine receptor type 1 (Cxcr1) (Mus musculus (Mouse)).